A 202-amino-acid polypeptide reads, in one-letter code: Phosphatidyl-N-methylethanolamine N-methyltransferase (202 aa).

Residues 1-12 (MTTLSDYVDFSQ) lie on the Lumenal side of the membrane. The helical intramembrane region spans 13-33 (DSFKYAALSIAFNPIFWNVVA). At 34–45 (RAEYRSHFLTRI) the chain is on the lumenal side. Residues 46–66 (FGSPYRGCYFLAITIFSLGIL) traverse the membrane as a helical segment. At 67-90 (RDHIYQQALEDQPYYAPVHQPVLG) the chain is on the cytoplasmic side. The helical transmembrane segment at 91-111 (GALFAVGSVLVLSSMYALGVT) threads the bilayer. Residue 95 to 97 (AVG) participates in S-adenosyl-L-methionine binding. At 112–154 (GTYLGDYFGILMDAPVTGFPFNVTGSPMYWGSTLNFLGVALYK) the chain is on the lumenal side. Residues 155–175 (GKVAGILLTALVFVLYWFALK) form a helical membrane-spanning segment. The Cytoplasmic segment spans residues 176-202 (WEDPFTAEIYAKRERERAKSKRGGKNQ). 177-178 (ED) is an S-adenosyl-L-methionine binding site.

The protein belongs to the class VI-like SAM-binding methyltransferase superfamily. PEMT/PEM2 methyltransferase family.

It localises to the endoplasmic reticulum membrane. Its subcellular location is the mitochondrion membrane. The catalysed reaction is a 1,2-diacyl-sn-glycero-3-phospho-N-methylethanolamine + S-adenosyl-L-methionine = a 1,2-diacyl-sn-glycero-3-phospho-N,N-dimethylethanolamine + S-adenosyl-L-homocysteine + H(+). The enzyme catalyses a 1,2-diacyl-sn-glycero-3-phospho-N,N-dimethylethanolamine + S-adenosyl-L-methionine = a 1,2-diacyl-sn-glycero-3-phosphocholine + S-adenosyl-L-homocysteine + H(+). Its pathway is phospholipid metabolism; phosphatidylcholine biosynthesis. Functionally, catalyzes the second two steps of the methylation pathway of phosphatidylcholine biosynthesis, the SAM-dependent methylation of phosphatidylmonomethylethanolamine (PMME) to phosphatidyldimethylethanolamine (PDME) and of PDME to phosphatidylcholine (PC). The sequence is that of Phosphatidyl-N-methylethanolamine N-methyltransferase from Emericella nidulans (strain FGSC A4 / ATCC 38163 / CBS 112.46 / NRRL 194 / M139) (Aspergillus nidulans).